A 224-amino-acid polypeptide reads, in one-letter code: Tumor protein D52 (224 aa).

Residues S36 and S40 each carry the phosphoserine modification. A coiled-coil region spans residues A62–N114. The residue at position 176 (S176) is a Phosphoserine. Residues K187 to L224 form a disordered region. Over residues N203–T213 the composition is skewed to low complexity. Phosphoserine is present on S223.

This sequence belongs to the TPD52 family. As to quaternary structure, forms a homodimer or heterodimer with other members of the family. All isoforms interact with several 14-3-3 proteins. As to expression, isoform 2 is expressed in colon, breast, prostate, pancreas and kidney tumor cell lines. Isoform 2 is expressed at high levels in kidney, prostate, brain, small intestine and pancreas, at moderate levels in placenta and colon, at low levels in lung, liver and heart, and at very low levels in spleen, thymus, peripheral mononuclear blood cells, testis and ovary.

This is Tumor protein D52 (TPD52) from Homo sapiens (Human).